The primary structure comprises 21 residues: Helicopsin (21 aa).

This sequence belongs to the CRISP family. Contains 8 disulfide bonds. As to expression, expressed by the salivary gland.

The protein localises to the secreted. Helicopsin exhibits robust neurotoxic activity as shown by immediate death (about 8 minutes) of mice due to respiratory paralysis. The sequence is that of Helicopsin from Helicops angulatus (South American water snake).